The primary structure comprises 305 residues: Small ribosomal subunit protein bS1B (305 aa).

3 consecutive S1 motif domains span residues 29–98, 116–180, and 194–262; these read GQTV…LSRR, GKTL…LTQR, and GNIY…LSTR.

It belongs to the bacterial ribosomal protein bS1 family.

In terms of biological role, binds mRNA. The sequence is that of Small ribosomal subunit protein bS1B (rps1b) from Synechocystis sp. (strain ATCC 27184 / PCC 6803 / Kazusa).